We begin with the raw amino-acid sequence, 185 residues long: Ribosome-recycling factor (185 aa).

This sequence belongs to the RRF family.

Its subcellular location is the cytoplasm. Functionally, responsible for the release of ribosomes from messenger RNA at the termination of protein biosynthesis. May increase the efficiency of translation by recycling ribosomes from one round of translation to another. The protein is Ribosome-recycling factor of Streptococcus pneumoniae (strain P1031).